The sequence spans 75 residues: Small ribosomal subunit protein bS18 (75 aa).

The protein belongs to the bacterial ribosomal protein bS18 family. As to quaternary structure, part of the 30S ribosomal subunit. Forms a tight heterodimer with protein bS6.

Functionally, binds as a heterodimer with protein bS6 to the central domain of the 16S rRNA, where it helps stabilize the platform of the 30S subunit. This chain is Small ribosomal subunit protein bS18, found in Acinetobacter baylyi (strain ATCC 33305 / BD413 / ADP1).